Here is a 172-residue protein sequence, read N- to C-terminus: Shikimate kinase (172 aa).

Residue Gly14–Thr19 participates in ATP binding. A Mg(2+)-binding site is contributed by Ser18. Positions 36, 60, and 82 each coordinate substrate. Residue Arg120 coordinates ATP. Arg139 lines the substrate pocket. Gln156 lines the ATP pocket.

This sequence belongs to the shikimate kinase family. In terms of assembly, monomer. The cofactor is Mg(2+).

It is found in the cytoplasm. It carries out the reaction shikimate + ATP = 3-phosphoshikimate + ADP + H(+). The protein operates within metabolic intermediate biosynthesis; chorismate biosynthesis; chorismate from D-erythrose 4-phosphate and phosphoenolpyruvate: step 5/7. In terms of biological role, catalyzes the specific phosphorylation of the 3-hydroxyl group of shikimic acid using ATP as a cosubstrate. This chain is Shikimate kinase, found in Vibrio parahaemolyticus serotype O3:K6 (strain RIMD 2210633).